A 709-amino-acid chain; its full sequence is Elongation factor G (709 aa).

The tr-type G domain maps to 10–286; that stretch reads NKVRNIGIMA…AVVDFLPSPL (277 aa). GTP contacts are provided by residues 19–26, 83–87, and 137–140; these read AHIDAGKT, DTPGH, and NKMD.

The protein belongs to the TRAFAC class translation factor GTPase superfamily. Classic translation factor GTPase family. EF-G/EF-2 subfamily.

The protein localises to the cytoplasm. Functionally, catalyzes the GTP-dependent ribosomal translocation step during translation elongation. During this step, the ribosome changes from the pre-translocational (PRE) to the post-translocational (POST) state as the newly formed A-site-bound peptidyl-tRNA and P-site-bound deacylated tRNA move to the P and E sites, respectively. Catalyzes the coordinated movement of the two tRNA molecules, the mRNA and conformational changes in the ribosome. In Corynebacterium glutamicum (strain R), this protein is Elongation factor G.